Consider the following 109-residue polypeptide: Elongation factor G, chloroplastic (109 aa).

It belongs to the GTP-binding elongation factor family. EF-G/EF-2 subfamily.

The protein localises to the plastid. The protein resides in the chloroplast. The protein operates within protein biosynthesis; polypeptide chain elongation. In terms of biological role, chloroplast-localized elongation factor EF-G involved in protein synthesis in plastids. Catalyzes the GTP-dependent ribosomal translocation step during translation elongation. During this step, the ribosome changes from the pre-translocational (PRE) to the post-translocational (POST) state as the newly formed A-site-bound peptidyl-tRNA and P-site-bound deacylated tRNA move to the P and E sites, respectively. Catalyzes the coordinated movement of the two tRNA molecules, the mRNA and conformational changes in the ribosome. The protein is Elongation factor G, chloroplastic of Arachis hypogaea (Peanut).